Consider the following 320-residue polypeptide: Chorion protein S36 (320 aa).

An N-terminal signal peptide occupies residues 1 to 18 (MNCFLFTLFFVAAPLATA). 5 repeat units span residues 178–181 (AAPV), 258–261 (AAPA), 266–269 (AAPA), 274–277 (AAPA), and alanine 290. Residues 259–320 (APAQSYNAAP…YGSAPPASGY (62 aa)) form a disordered region.

The protein belongs to the chorion protein S36 family.

The protein localises to the secreted. Functionally, chorion membrane (egg shell) protein; plays a role in protecting the egg from the environment. This is Chorion protein S36 (Cp36) from Ceratitis capitata (Mediterranean fruit fly).